The sequence spans 375 residues: Pectate lyase 1 (375 aa).

An N-terminal signal peptide occupies residues 1–21 (MASCTLLAVLVFLCAIVSCFS). A disulfide bond links Cys-28 and Cys-45. Asn-110 is a glycosylation site (N-linked (GlcNAc...) asparagine). The cysteines at positions 128 and 147 are disulfide-linked. The N-linked (GlcNAc...) asparagine glycan is linked to Asn-148. Residue Asp-170 participates in Ca(2+) binding. N-linked (GlcNAc...) asparagine glycosylation is present at Asn-178. Asp-194 and Asp-198 together coordinate Ca(2+). Residue Arg-250 is part of the active site. A glycan (N-linked (GlcNAc...) asparagine) is linked at Asn-293. An intrachain disulfide couples Cys-306 to Cys-312. N-linked (GlcNAc...) asparagine glycosylation is present at Asn-352.

The protein belongs to the polysaccharide lyase 1 family. Amb a subfamily. Requires Ca(2+) as cofactor.

The enzyme catalyses Eliminative cleavage of (1-&gt;4)-alpha-D-galacturonan to give oligosaccharides with 4-deoxy-alpha-D-galact-4-enuronosyl groups at their non-reducing ends.. It participates in glycan metabolism; pectin degradation; 2-dehydro-3-deoxy-D-gluconate from pectin: step 2/5. In terms of biological role, has pectate lyase activity. The sequence is that of Pectate lyase 1 from Chamaecyparis obtusa (Hinoki false-cypress).